The sequence spans 81 residues: Small ribosomal subunit protein bS18 (81 aa).

This sequence belongs to the bacterial ribosomal protein bS18 family. Part of the 30S ribosomal subunit. Forms a tight heterodimer with protein bS6.

In terms of biological role, binds as a heterodimer with protein bS6 to the central domain of the 16S rRNA, where it helps stabilize the platform of the 30S subunit. This Parvibaculum lavamentivorans (strain DS-1 / DSM 13023 / NCIMB 13966) protein is Small ribosomal subunit protein bS18.